The sequence spans 312 residues: Porphobilinogen deaminase (312 aa).

Cysteine 243 carries the S-(dipyrrolylmethanemethyl)cysteine modification.

The protein belongs to the HMBS family. Monomer. It depends on dipyrromethane as a cofactor.

The enzyme catalyses 4 porphobilinogen + H2O = hydroxymethylbilane + 4 NH4(+). It participates in porphyrin-containing compound metabolism; protoporphyrin-IX biosynthesis; coproporphyrinogen-III from 5-aminolevulinate: step 2/4. In terms of biological role, tetrapolymerization of the monopyrrole PBG into the hydroxymethylbilane pre-uroporphyrinogen in several discrete steps. The polypeptide is Porphobilinogen deaminase (Vibrio vulnificus (strain CMCP6)).